The following is a 1169-amino-acid chain: Phospholipid-transporting ATPase IF (1169 aa).

Residues 1–47 (LGFDPPHQSDTRTIYIANRFPQNGLYTPQKFIDNRIISSKYTVWNFV) lie on the Cytoplasmic side of the membrane. A helical transmembrane segment spans residues 48–69 (PKNLFEQFRRVANFYFLIIFLV). Residues 70–74 (QLMID) are Extracellular-facing. The chain crosses the membrane as a helical span at residues 75 to 96 (TPTSPITSGLPLFFVITVTAIK). The Cytoplasmic portion of the chain corresponds to 97–281 (QGYEDWLRHN…SAVEKSMNTF (185 aa)). Residues 282–303 (LIIYLIILISEAIISTILKYTW) form a helical membrane-spanning segment. Over 304 to 333 (QAEEKWDEPWYNQKTEHQRNSSKILRFISD) the chain is Extracellular. A helical transmembrane segment spans residues 334-351 (FLAFLVLYNFIIPISLYV). Over 352 to 868 (TVEMQKFLGS…HGHFYYIRIA (517 aa)) the chain is Cytoplasmic. Asp399 functions as the 4-aspartylphosphate intermediate in the catalytic mechanism. Asp399, Lys400, Thr401, Glu523, Phe564, Lys587, Arg618, Thr698, Gly699, Asp700, Arg786, and Lys792 together coordinate ATP. Residue Asp399 participates in Mg(2+) binding. Residue Thr401 participates in Mg(2+) binding. The segment at 794–802 (KVIRLIKIS) is required for binding to the RING-finger of HLTF. Asp813 contributes to the Mg(2+) binding site. ATP is bound by residues Asn816 and Asp817. Asp817 contributes to the Mg(2+) binding site. A helical membrane pass occupies residues 869-890 (TLVQYFFYKNVCFITPQFLYQF). Over 891–902 (YCLFSQQTLYDS) the chain is Extracellular. Residues 903-922 (VYLTLYNICFTSLPILIYSL) form a helical membrane-spanning segment. At 923–952 (LEQHIDPHILQNKPTLYRDISKNRLLSIKT) the chain is on the cytoplasmic side. Residues 953–974 (FLYWTILGFSRSFIFLFGSYFL) form a helical membrane-spanning segment. Over 975-989 (IGKDASLLGNGQMFG) the chain is Extracellular. Residues 990 to 1012 (NWTFGTLVFTVMVITVTVKMALE) traverse the membrane as a helical segment. Residues 1013–1017 (THFWT) are Cytoplasmic-facing. The helical transmembrane segment at 1018 to 1039 (WINHLVTWGSIIFYFVFSLFYG) threads the bilayer. At 1040–1057 (GILWPFLGSQNMYFVFIQ) the chain is on the extracellular side. Residues 1058 to 1082 (LVSSGSAWFAIILMVVTCLFLDVMK) traverse the membrane as a helical segment. Over 1083-1169 (KVFDRQLHPT…TLSTMDSSTC (87 aa)) the chain is Cytoplasmic. Ser1146 carries the phosphoserine modification.

Belongs to the cation transport ATPase (P-type) (TC 3.A.3) family. Type IV subfamily. As to quaternary structure, component of a P4-ATPase flippase complex which consists of a catalytic alpha subunit ATP11B and an accessory beta subunit TMEM30A. Interacts with HLTF (via the RING-finger). The cofactor is Mg(2+). As to expression, ubiquitously expressed.

The protein resides in the recycling endosome membrane. It localises to the early endosome. It is found in the endoplasmic reticulum. The protein localises to the golgi apparatus. Its subcellular location is the trans-Golgi network. The protein resides in the nucleus inner membrane. It catalyses the reaction ATP + H2O + phospholipidSide 1 = ADP + phosphate + phospholipidSide 2.. The enzyme catalyses a 1,2-diacyl-sn-glycero-3-phospho-L-serine(out) + ATP + H2O = a 1,2-diacyl-sn-glycero-3-phospho-L-serine(in) + ADP + phosphate + H(+). The catalysed reaction is a 1,2-diacyl-sn-glycero-3-phosphoethanolamine(out) + ATP + H2O = a 1,2-diacyl-sn-glycero-3-phosphoethanolamine(in) + ADP + phosphate + H(+). Its function is as follows. Catalytic component of a P4-ATPase flippase complex which catalyzes the hydrolysis of ATP coupled to the transport of aminophospholipids, phosphatidylserines (PS) and phosphatidylethanolamines (PE), from the outer to the inner leaflet of intracellular membranes. May contribute to the maintenance of membrane lipid asymmetry in endosome compartment. Appears to play a role in the subnuclear trafficking of transcription factors with RING motifs. The polypeptide is Phospholipid-transporting ATPase IF (ATP11B) (Oryctolagus cuniculus (Rabbit)).